A 1062-amino-acid polypeptide reads, in one-letter code: Inactive tyrosine-protein kinase 7 (1062 aa).

The signal sequence occupies residues 1-22; sequence MGARPLTLLRALLLPLLAGAQA. Ig-like C2-type domains follow at residues 23–112, 120–210, 217–309, 301–399, 404–489, 495–578, and 570–672; these read AIVF…ASFN, PVVL…FTLS, ARVV…EATL, PPIV…VNIT, PTWL…ARVQ, KFTP…HVQL, and GQIR…APLL. The Extracellular segment spans residues 23–696; the sequence is AIVFIKEPSS…SPPPYKMIQT (674 aa). Residues Cys-45 and Cys-93 are joined by a disulfide bond. Asn-98, Asn-108, Asn-176, Asn-206, Asn-260, and Asn-275 each carry an N-linked (GlcNAc...) asparagine glycan. An intrachain disulfide couples Cys-142 to Cys-192. Disulfide bonds link Cys-238-Cys-293 and Cys-335-Cys-383. Residues Asn-397, Asn-455, Asn-559, and Asn-638 are each glycosylated (N-linked (GlcNAc...) asparagine). Cystine bridges form between Cys-425–Cys-473, Cys-516–Cys-562, and Cys-605–Cys-656. The chain crosses the membrane as a helical span at residues 697–717; that stretch reads IGLSVGAAVAYIIAVLGLMFY. The Cytoplasmic portion of the chain corresponds to 718 to 1062; the sequence is CKKRCKAKRL…LGDSPADSKQ (345 aa). 2 disordered regions span residues 728–750 and 1039–1062; these read QKQP…QNGQ and NPKD…DSKQ. The segment at 786–1062 is interaction with CTNNB1; that stretch reads ASLQPITTLG…LGDSPADSKQ (277 aa). The Protein kinase; inactive domain maps to 788-1058; it reads LQPITTLGKS…IASTLGDSPA (271 aa). Position 1056 is a phosphoserine (Ser-1056).

Belongs to the protein kinase superfamily. Tyr protein kinase family. Insulin receptor subfamily. In terms of assembly, interacts with CTNNB1. Post-translationally, MMP14 cleaves PTK7 between Pro-613 and Leu-614 generating an N-terminal soluble (70 kDa) fragment and a membrane C-terminal (50 kDa) fragment. Proteolysis by MMP14 regulates PTK7 function in non-canonical Wnt signaling pathway. As to expression, expressed at high levels in lung and un-pregnant uterus among adult tissues, and in the tail, limbs, somites, gut and craniofacial regions among embryonic tissues.

It localises to the membrane. The protein resides in the cell junction. Functionally, inactive tyrosine kinase involved in Wnt signaling pathway. Component of both the non-canonical (also known as the Wnt/planar cell polarity signaling) and the canonical Wnt signaling pathway. Functions in cell adhesion, cell migration, cell polarity, proliferation, actin cytoskeleton reorganization and apoptosis. Has a role in embryogenesis, epithelial tissue organization and angiogenesis. The sequence is that of Inactive tyrosine-protein kinase 7 (Ptk7) from Mus musculus (Mouse).